A 193-amino-acid polypeptide reads, in one-letter code: Ancillary SecYEG translocon subunit (193 aa).

Topologically, residues 1-8 (MLNISKKN) are cytoplasmic. The helical transmembrane segment at 9–29 (IIFFILFFLIISLILFNWKYF) threads the bilayer. The Periplasmic portion of the chain corresponds to 30-193 (SLVNKENLES…MKLNELKEQN (164 aa)).

The protein belongs to the YfgM family. Interacts with the SecYEG translocon. Forms a complex with PpiD.

The protein localises to the cell inner membrane. Its function is as follows. May mediate protein transfer from the SecYEG translocon to the periplasmic chaperone network via its periplasmic C-terminal region. The polypeptide is Ancillary SecYEG translocon subunit (Buchnera aphidicola subsp. Acyrthosiphon pisum (strain APS) (Acyrthosiphon pisum symbiotic bacterium)).